We begin with the raw amino-acid sequence, 502 residues long: ATP synthase subunit alpha (502 aa).

Residues 115 to 135 (VDGLGPINTTNTRPIESPAPG) form a disordered region. Residue 169–176 (GDRQTGKT) coordinates ATP.

The protein belongs to the ATPase alpha/beta chains family. As to quaternary structure, F-type ATPases have 2 components, CF(1) - the catalytic core - and CF(0) - the membrane proton channel. CF(1) has five subunits: alpha(3), beta(3), gamma(1), delta(1), epsilon(1). CF(0) has three main subunits: a(1), b(2) and c(9-12). The alpha and beta chains form an alternating ring which encloses part of the gamma chain. CF(1) is attached to CF(0) by a central stalk formed by the gamma and epsilon chains, while a peripheral stalk is formed by the delta and b chains.

Its subcellular location is the cell membrane. The enzyme catalyses ATP + H2O + 4 H(+)(in) = ADP + phosphate + 5 H(+)(out). In terms of biological role, produces ATP from ADP in the presence of a proton gradient across the membrane. The alpha chain is a regulatory subunit. The chain is ATP synthase subunit alpha from Bacillus cereus (strain B4264).